The primary structure comprises 185 residues: Regulatory protein RecX (185 aa).

It belongs to the RecX family.

The protein resides in the cytoplasm. Modulates RecA activity. This Thermobifida fusca (strain YX) protein is Regulatory protein RecX.